A 417-amino-acid polypeptide reads, in one-letter code: Phosphoglycerate kinase (417 aa).

(2R)-3-phosphoglycerate contacts are provided by Val23, Asp24, Phe25, Asn26, Gln39, Arg40, Ser63, His64, Gly66, Arg67, Leu122, Arg123, His170, and Arg171. An ADP-binding site is contributed by Gly214. Position 214 (Gly214) interacts with CDP. 2 residues coordinate AMP: Ala215 and Lys216. Ala215 provides a ligand contact to ATP. Residue Ala215 coordinates Mg(2+). Asp219 provides a ligand contact to CDP. Residue Asp219 participates in Mg(2+) binding. Residue Lys220 coordinates AMP. Lys220 is a binding site for ATP. Position 238 (Gly238) interacts with ADP. Gly238 is a binding site for CDP. The AMP site is built by Gly239 and Gly313. 2 residues coordinate ATP: Gly239 and Gly313. Residues Gly338, Ala340, and Phe343 each coordinate CDP. An ADP-binding site is contributed by Phe343. Glu344 contributes to the AMP binding site. ATP-binding residues include Glu344, Asp375, and Thr376. Asp375 serves as a coordination point for Mg(2+).

It belongs to the phosphoglycerate kinase family. Monomer. Requires Mg(2+) as cofactor.

The protein localises to the cytoplasm. It is found in the mitochondrion. It carries out the reaction (2R)-3-phosphoglycerate + ATP = (2R)-3-phospho-glyceroyl phosphate + ADP. Its pathway is carbohydrate degradation; glycolysis; pyruvate from D-glyceraldehyde 3-phosphate: step 2/5. Functionally, catalyzes one of the two ATP producing reactions in the glycolytic pathway via the reversible conversion of 1,3-diphosphoglycerate to 3-phosphoglycerate. Both L- and D- forms of purine and pyrimidine nucleotides can be used as substrates, but the activity is much lower on pyrimidines. Negatively regulates the biosynthesis of acetyl-CoA from pyruvate in the mitochondrion. The polypeptide is Phosphoglycerate kinase (pgk1) (Hypocrea rufa (Trichoderma viride)).